The primary structure comprises 59 residues: Large ribosomal subunit protein uL30 (59 aa).

This sequence belongs to the universal ribosomal protein uL30 family. In terms of assembly, part of the 50S ribosomal subunit.

This Bacillus licheniformis (strain ATCC 14580 / DSM 13 / JCM 2505 / CCUG 7422 / NBRC 12200 / NCIMB 9375 / NCTC 10341 / NRRL NRS-1264 / Gibson 46) protein is Large ribosomal subunit protein uL30.